The primary structure comprises 172 residues: C-phycocyanin-2 beta subunit (172 aa).

An N4-methylasparagine modification is found at Asn72. Residues Cys82 and Cys153 each contribute to the (2R,3E)-phycocyanobilin site.

The protein belongs to the phycobiliprotein family. Heterodimer of an alpha and a beta subunit, which further assembles into trimers and the trimers into hexamers. Post-translationally, contains two covalently linked bilin chromophores.

The protein localises to the cellular thylakoid membrane. In terms of biological role, light-harvesting photosynthetic bile pigment-protein from the phycobiliprotein complex (phycobilisome, PBS). Phycocyanin is the major phycobiliprotein in the PBS rod. The chain is C-phycocyanin-2 beta subunit (cpcB2) from Pseudanabaena tenuis (strain PCC 7409).